We begin with the raw amino-acid sequence, 65 residues long: Small, acid-soluble spore protein 2 (65 aa).

This sequence belongs to the alpha/beta-type SASP family.

Functionally, SASP are bound to spore DNA. They are double-stranded DNA-binding proteins that cause DNA to change to an a-like conformation. They protect the DNA backbone from chemical and enzymatic cleavage and are thus involved in dormant spore's high resistance to UV light. In Bacillus cereus, this protein is Small, acid-soluble spore protein 2 (sasP-2).